A 531-amino-acid chain; its full sequence is Peptide chain release factor 3 (531 aa).

The 269-residue stretch at 10–278 (RRRRTFAIIS…SLIDWAPAPK (269 aa)) folds into the tr-type G domain. GTP contacts are provided by residues 19-26 (SHPDAGKT), 87-91 (DTPGH), and 141-144 (NKYD).

Belongs to the TRAFAC class translation factor GTPase superfamily. Classic translation factor GTPase family. PrfC subfamily.

The protein resides in the cytoplasm. Increases the formation of ribosomal termination complexes and stimulates activities of RF-1 and RF-2. It binds guanine nucleotides and has strong preference for UGA stop codons. It may interact directly with the ribosome. The stimulation of RF-1 and RF-2 is significantly reduced by GTP and GDP, but not by GMP. This chain is Peptide chain release factor 3, found in Neisseria gonorrhoeae (strain NCCP11945).